The primary structure comprises 193 residues: Flagellar transcriptional regulator FlhC (193 aa).

Residues cysteine 138, cysteine 141, cysteine 158, and cysteine 161 each contribute to the Zn(2+) site.

It belongs to the FlhC family. As to quaternary structure, heterohexamer composed of two FlhC and four FlhD subunits. Each FlhC binds a FlhD dimer, forming a heterotrimer, and a hexamer assembles by dimerization of two heterotrimers. Requires Zn(2+) as cofactor.

The protein localises to the cytoplasm. Functions in complex with FlhD as a master transcriptional regulator that regulates transcription of several flagellar and non-flagellar operons by binding to their promoter region. Activates expression of class 2 flagellar genes, including fliA, which is a flagellum-specific sigma factor that turns on the class 3 genes. Also regulates genes whose products function in a variety of physiological pathways. This chain is Flagellar transcriptional regulator FlhC, found in Yersinia enterocolitica.